We begin with the raw amino-acid sequence, 244 residues long: High frequency lysogenization protein HflD homolog (244 aa).

It belongs to the HflD family.

Its subcellular location is the cytoplasm. It localises to the cell inner membrane. The chain is High frequency lysogenization protein HflD homolog from Acinetobacter baumannii (strain SDF).